Here is a 250-residue protein sequence, read N- to C-terminus: Deoxynucleoside kinase (250 aa).

27–35 (GNIGSGKTT) is an ATP binding site. Positions 52, 70, and 81 each coordinate substrate. Glu104 serves as the catalytic Proton acceptor. 2 residues coordinate substrate: Arg105 and Glu172. Phosphoserine occurs at positions 236, 241, and 243.

This sequence belongs to the DCK/DGK family. In terms of assembly, monomer.

It catalyses the reaction a 2'-deoxyribonucleoside + ATP = a 2'-deoxyribonucleoside 5'-phosphate + ADP + H(+). Its activity is regulated as follows. Subject to feedback inhibition by dTTP. Deoxyribonucleoside kinase that has a broad specificity phosphorylating thymidine, 2'-deoxyriboadenosine, 2'-deoxyribocytidine and 2'-deoxyriboguanosine. Specificity is higher for pyrimidine nucleosides. Several anti-viral and anti-cancer nucleoside analogs are also efficiently phosphorylated. The chain is Deoxynucleoside kinase (dnk) from Drosophila melanogaster (Fruit fly).